The primary structure comprises 403 residues: PP2A regulatory subunit TAP46 (403 aa).

Disordered stretches follow at residues 158-184 (ERRGRSTKAAALSSPVETEEDDVLDDD) and 351-403 (ANSS…TPCG). Acidic residues-rich tracts occupy residues 174–184 (ETEEDDVLDDD) and 366–375 (EDDEEDDDDA). A compositionally biased stretch (basic and acidic residues) spans 376–391 (AQDKARAWDDWKDDNP).

This sequence belongs to the IGBP1/TAP42 family. In terms of assembly, interacts with NPP4 and NPP5, two catalytic subunits (subunit C) of PP2A.

It is found in the cytoplasm. Its subcellular location is the nucleus. Functionally, involved in the regulation of the TOR signaling pathway. Seems to act as a regulator of PP2A catalytic activity. In Nicotiana benthamiana, this protein is PP2A regulatory subunit TAP46.